We begin with the raw amino-acid sequence, 443 residues long: Eukaryotic translation initiation factor 3 subunit E (443 aa).

In terms of domain architecture, PCI spans 249-417; the sequence is LDLFFNAGFI…GTVVMNHPPS (169 aa).

This sequence belongs to the eIF-3 subunit E family. Component of the eukaryotic translation initiation factor 3 (eIF-3) complex.

Its subcellular location is the cytoplasm. Functionally, component of the eukaryotic translation initiation factor 3 (eIF-3) complex, which is involved in protein synthesis of a specialized repertoire of mRNAs and, together with other initiation factors, stimulates binding of mRNA and methionyl-tRNAi to the 40S ribosome. The eIF-3 complex specifically targets and initiates translation of a subset of mRNAs involved in cell proliferation. The sequence is that of Eukaryotic translation initiation factor 3 subunit E (int-6) from Neurospora crassa (strain ATCC 24698 / 74-OR23-1A / CBS 708.71 / DSM 1257 / FGSC 987).